The sequence spans 188 residues: Elongation factor P (188 aa).

This sequence belongs to the elongation factor P family.

It is found in the cytoplasm. It functions in the pathway protein biosynthesis; polypeptide chain elongation. Involved in peptide bond synthesis. Stimulates efficient translation and peptide-bond synthesis on native or reconstituted 70S ribosomes in vitro. Probably functions indirectly by altering the affinity of the ribosome for aminoacyl-tRNA, thus increasing their reactivity as acceptors for peptidyl transferase. This is Elongation factor P from Caulobacter sp. (strain K31).